A 273-amino-acid chain; its full sequence is Undecaprenyl-diphosphatase (273 aa).

A run of 7 helical transmembrane segments spans residues 54-74, 90-110, 116-136, 156-178, 190-210, 222-242, and 252-272; these read LGSILAVVVMFWRQLFGLIGI, LTLIHILLGMIPAVVLGLVFH, LFNPINVMYALVVGGLLLIAA, QAFMIGCFQCLALWPGFSRSGAT, YAASEFSFLLAVPMMMGATVL, ADIPMFAVGFVTAFVVALIAI, and ISFIPFAIYRFVVAAAVYVVF.

It belongs to the UppP family.

It is found in the cell inner membrane. The catalysed reaction is di-trans,octa-cis-undecaprenyl diphosphate + H2O = di-trans,octa-cis-undecaprenyl phosphate + phosphate + H(+). Its function is as follows. Catalyzes the dephosphorylation of undecaprenyl diphosphate (UPP). Confers resistance to bacitracin. This chain is Undecaprenyl-diphosphatase, found in Salmonella paratyphi A (strain ATCC 9150 / SARB42).